Consider the following 456-residue polypeptide: MTHQGIGCLVKWLYLVLIVHTLLCIGQLECRQQHHNRNNNNNNRRADSSSSEEGHGNTSDGLDNFADQDASFVGHGHQPRRGQRKKQQGGGGGGSGGGGGNGGGGGSRHNRNEESGISLWINEQQLKMLTALYFPQGYSERLYAIHNSRVTNDLRDTTLYNFLVIPSEVNYVNFTWKSGRRKYFYDFDRLQTMDESILKAPTLSIRKSGRIPQEQKNFSIFLPCTGNSSGTASFNVGLKIQTRHNKPLSGTPIRLNFKKECAHRGVYDIDASNPTSLTTLQECSLKCGKNGYCNEHHICKCNVGYTGQYCETAFCFPQCLNGGNCTAPSVCTCPEGYQGTQCEGGICKDKCLNGGKCIQKDKCQCSKGYYGLRCEYSKCVIPCKNEGRCIGNNLCRCPNGLRGDHCEIGRKQRSICKCRNGTCVSHKHCKCHPGFYGRHCNGRKRRHVHRNDDSKF.

The first 30 residues, 1–30 (MTHQGIGCLVKWLYLVLIVHTLLCIGQLEC), serve as a signal peptide directing secretion. Positions 34–112 (HHNRNNNNNN…GGGGSRHNRN (79 aa)) are disordered. Residues 44-55 (RRADSSSSEEGH) show a composition bias toward basic and acidic residues. N57 carries N-linked (GlcNAc...) asparagine glycosylation. Basic residues predominate over residues 77-87 (HQPRRGQRKKQ). Gly residues predominate over residues 88-107 (QGGGGGGSGGGGGNGGGGGS). The WIF domain occupies 119-261 (LWINEQQLKM…PIRLNFKKEC (143 aa)). Residues N173, N217, and N227 are each glycosylated (N-linked (GlcNAc...) asparagine). Intrachain disulfides connect C224–C261, C283–C293, C287–C299, C301–C310, C315–C325, C319–C331, C333–C342, C347–C357, C351–C363, C365–C374, C379–C389, C383–C395, C397–C406, C416–C423, C418–C429, and C431–C440. EGF-like domains lie at 279–311 (TLQE…QYCE), 315–342 (CFPQ…GTQC), 343–375 (EGGI…LRCE), 376–407 (YSKC…DHCE), and 412–441 (QRSI…RHCN). The N-linked (GlcNAc...) asparagine glycan is linked to N324. N-linked (GlcNAc...) asparagine glycosylation occurs at N420.

As to quaternary structure, interacts with hh. In terms of tissue distribution, at the blastoderm stage, it is ubiquitously expressed. As embryogenesis continues, it is expressed in the epidermis and central nervous system, this expression being segmentally modulated. Also highly expressed at the foregut and hindgut throughout embryogenesis. In third instar wing imaginal disks, it is highly expressed in the most anterior and posterior parts of the disk and weakly expressed at the antero/posterior (A/P) compartment border. In the leg disks and the antenna part of the eye-antennal imaginal disk it is also weakly expressed at the A/P compartment border. Weakly expressed in the morphogenetic furrow in the eye primordium.

The protein resides in the secreted. It is found in the extracellular space. It localises to the extracellular matrix. Required for normal accumulation and movement of lipid-modified hedgehog (hh) morphogen. May act by stabilizing the interaction between heparan sulfate proteoglycans (HSPGs) and hh, HSPGs being required for diffusion of hh morphogen. Not involved in wingless (wg) morphogen movement, suggesting that it may provide HSPG specificity for Hh. This Drosophila melanogaster (Fruit fly) protein is Protein shifted (shf).